Consider the following 277-residue polypeptide: 3-methyl-2-oxobutanoate hydroxymethyltransferase (277 aa).

The Mg(2+) site is built by aspartate 43 and aspartate 82. 3-methyl-2-oxobutanoate contacts are provided by residues 43-44, aspartate 82, and lysine 112; that span reads DS. Position 114 (glutamate 114) interacts with Mg(2+). Glutamate 181 (proton acceptor) is an active-site residue.

This sequence belongs to the PanB family. In terms of assembly, homodecamer; pentamer of dimers. Requires Mg(2+) as cofactor.

Its subcellular location is the cytoplasm. The catalysed reaction is 3-methyl-2-oxobutanoate + (6R)-5,10-methylene-5,6,7,8-tetrahydrofolate + H2O = 2-dehydropantoate + (6S)-5,6,7,8-tetrahydrofolate. Its pathway is cofactor biosynthesis; (R)-pantothenate biosynthesis; (R)-pantoate from 3-methyl-2-oxobutanoate: step 1/2. Functionally, catalyzes the reversible reaction in which hydroxymethyl group from 5,10-methylenetetrahydrofolate is transferred onto alpha-ketoisovalerate to form ketopantoate. The chain is 3-methyl-2-oxobutanoate hydroxymethyltransferase from Listeria monocytogenes serovar 1/2a (strain ATCC BAA-679 / EGD-e).